The chain runs to 131 residues: Ribosome-binding factor A (131 aa).

This sequence belongs to the RbfA family. Monomer. Binds 30S ribosomal subunits, but not 50S ribosomal subunits or 70S ribosomes.

It is found in the cytoplasm. One of several proteins that assist in the late maturation steps of the functional core of the 30S ribosomal subunit. Associates with free 30S ribosomal subunits (but not with 30S subunits that are part of 70S ribosomes or polysomes). Required for efficient processing of 16S rRNA. May interact with the 5'-terminal helix region of 16S rRNA. This Vibrio vulnificus (strain CMCP6) protein is Ribosome-binding factor A.